Reading from the N-terminus, the 373-residue chain is Queuine tRNA-ribosyltransferase (373 aa).

Asp-89 acts as the Proton acceptor in catalysis. Residues 89-93 (DSGGF), Asp-143, Gln-187, and Gly-214 contribute to the substrate site. Positions 245 to 251 (GVGKPED) are RNA binding. Residue Asp-264 is the Nucleophile of the active site. Positions 269-273 (TRNAR) are RNA binding; important for wobble base 34 recognition. Residues Cys-302, Cys-304, Cys-307, and His-333 each coordinate Zn(2+).

It belongs to the queuine tRNA-ribosyltransferase family. As to quaternary structure, homodimer. Within each dimer, one monomer is responsible for RNA recognition and catalysis, while the other monomer binds to the replacement base PreQ1. It depends on Zn(2+) as a cofactor.

The enzyme catalyses 7-aminomethyl-7-carbaguanine + guanosine(34) in tRNA = 7-aminomethyl-7-carbaguanosine(34) in tRNA + guanine. It participates in tRNA modification; tRNA-queuosine biosynthesis. Functionally, catalyzes the base-exchange of a guanine (G) residue with the queuine precursor 7-aminomethyl-7-deazaguanine (PreQ1) at position 34 (anticodon wobble position) in tRNAs with GU(N) anticodons (tRNA-Asp, -Asn, -His and -Tyr). Catalysis occurs through a double-displacement mechanism. The nucleophile active site attacks the C1' of nucleotide 34 to detach the guanine base from the RNA, forming a covalent enzyme-RNA intermediate. The proton acceptor active site deprotonates the incoming PreQ1, allowing a nucleophilic attack on the C1' of the ribose to form the product. After dissociation, two additional enzymatic reactions on the tRNA convert PreQ1 to queuine (Q), resulting in the hypermodified nucleoside queuosine (7-(((4,5-cis-dihydroxy-2-cyclopenten-1-yl)amino)methyl)-7-deazaguanosine). The protein is Queuine tRNA-ribosyltransferase of Tolumonas auensis (strain DSM 9187 / NBRC 110442 / TA 4).